Reading from the N-terminus, the 620-residue chain is Dihydroxy-acid dehydratase (620 aa).

Asp81 is a binding site for Mg(2+). Cys122 is a [2Fe-2S] cluster binding site. Mg(2+)-binding residues include Asp123 and Lys124. Residue Lys124 is modified to N6-carboxylysine. Cys195 is a [2Fe-2S] cluster binding site. Glu491 lines the Mg(2+) pocket. The active-site Proton acceptor is Ser517.

Belongs to the IlvD/Edd family. Homodimer. [2Fe-2S] cluster is required as a cofactor. Mg(2+) serves as cofactor.

It carries out the reaction (2R)-2,3-dihydroxy-3-methylbutanoate = 3-methyl-2-oxobutanoate + H2O. It catalyses the reaction (2R,3R)-2,3-dihydroxy-3-methylpentanoate = (S)-3-methyl-2-oxopentanoate + H2O. Its pathway is amino-acid biosynthesis; L-isoleucine biosynthesis; L-isoleucine from 2-oxobutanoate: step 3/4. It functions in the pathway amino-acid biosynthesis; L-valine biosynthesis; L-valine from pyruvate: step 3/4. Functionally, functions in the biosynthesis of branched-chain amino acids. Catalyzes the dehydration of (2R,3R)-2,3-dihydroxy-3-methylpentanoate (2,3-dihydroxy-3-methylvalerate) into 2-oxo-3-methylpentanoate (2-oxo-3-methylvalerate) and of (2R)-2,3-dihydroxy-3-methylbutanoate (2,3-dihydroxyisovalerate) into 2-oxo-3-methylbutanoate (2-oxoisovalerate), the penultimate precursor to L-isoleucine and L-valine, respectively. This Colwellia psychrerythraea (strain 34H / ATCC BAA-681) (Vibrio psychroerythus) protein is Dihydroxy-acid dehydratase.